The sequence spans 769 residues: Serine protease HtrA-like (769 aa).

Residues 1-20 (MDIGKKHVIPKSQYRRKRRE) show a composition bias toward basic residues. A disordered region spans residues 1 to 390 (MDIGKKHVIP…ATSKLNKGRA (390 aa)). Basic and acidic residues-rich tracts occupy residues 21–64 (FFHN…ERFK) and 71–108 (LEQR…DVSK). Polar residues predominate over residues 126 to 137 (YEQNSEATLSTK). A compositionally biased stretch (basic and acidic residues) spans 138–186 (STDKVESTDMRKLSSDKNKVGHEEQHVLSKPSEHDKETRIDFESSRTDS). The span at 247-262 (QQSQNEQTKTYTYGDS) shows a compositional bias: polar residues. 2 stretches are compositionally biased toward basic and acidic residues: residues 264–296 (QNDK…HIVD) and 310–330 (KTDD…HKQN). Polar residues predominate over residues 331-347 (ADSSETVGYQSQSSASH). Residues 348–364 (RITEKRNNAINDHDKLN) show a composition bias toward basic and acidic residues. The segment covering 366-390 (QKPNAKTSANNNQKKATSKLNKGRA) has biased composition (polar residues). The chain crosses the membrane as a helical span at residues 410–430 (LVILMGIIILIVILNAIFNNV). Catalysis depends on charge relay system residues His-504, Asp-534, and Ser-619. Positions 680 to 733 (IASLNSFERQAVKLPGKVKNGVVVDQVDNNGLADQSGLKKGDVITELDGKLLED) constitute a PDZ domain.

This sequence belongs to the peptidase S1C family.

It localises to the cell membrane. In Staphylococcus aureus (strain MSSA476), this protein is Serine protease HtrA-like.